The primary structure comprises 198 residues: MYDYIKGQLTKITAKYIVVEANGLGYMINVANPYSFTDSVNQLVTIYLHQVIREDAHLLFGFHTEDEKDVFLKLISVSGIGPTTALAIVAVDDNEGLVNAIDNSDIKYLMKFPKIGKKTAQQMVLDLAGKFVEAPQETGHTKARSNKAGNTQLDEAIEALLALGYKAKELKKIRAFFEETSETAEQYIKSALKLLMKG.

The domain I stretch occupies residues Met1–His63. Positions Thr64–Lys142 are domain II. Positions Ala143–Lys147 are flexible linker. A domain III region spans residues Ala148–Gly198.

This sequence belongs to the RuvA family. Homotetramer. Forms an RuvA(8)-RuvB(12)-Holliday junction (HJ) complex. HJ DNA is sandwiched between 2 RuvA tetramers; dsDNA enters through RuvA and exits via RuvB. An RuvB hexamer assembles on each DNA strand where it exits the tetramer. Each RuvB hexamer is contacted by two RuvA subunits (via domain III) on 2 adjacent RuvB subunits; this complex drives branch migration. In the full resolvosome a probable DNA-RuvA(4)-RuvB(12)-RuvC(2) complex forms which resolves the HJ.

The protein resides in the cytoplasm. In terms of biological role, the RuvA-RuvB-RuvC complex processes Holliday junction (HJ) DNA during genetic recombination and DNA repair, while the RuvA-RuvB complex plays an important role in the rescue of blocked DNA replication forks via replication fork reversal (RFR). RuvA specifically binds to HJ cruciform DNA, conferring on it an open structure. The RuvB hexamer acts as an ATP-dependent pump, pulling dsDNA into and through the RuvAB complex. HJ branch migration allows RuvC to scan DNA until it finds its consensus sequence, where it cleaves and resolves the cruciform DNA. This Streptococcus pyogenes serotype M2 (strain MGAS10270) protein is Holliday junction branch migration complex subunit RuvA.